A 167-amino-acid chain; its full sequence is Crossover junction endodeoxyribonuclease RuvC (167 aa).

Active-site residues include Asp7, Glu67, and Asp140. The Mg(2+) site is built by Asp7, Glu67, and Asp140.

It belongs to the RuvC family. As to quaternary structure, homodimer which binds Holliday junction (HJ) DNA. The HJ becomes 2-fold symmetrical on binding to RuvC with unstacked arms; it has a different conformation from HJ DNA in complex with RuvA. In the full resolvosome a probable DNA-RuvA(4)-RuvB(12)-RuvC(2) complex forms which resolves the HJ. Requires Mg(2+) as cofactor.

It localises to the cytoplasm. The catalysed reaction is Endonucleolytic cleavage at a junction such as a reciprocal single-stranded crossover between two homologous DNA duplexes (Holliday junction).. Functionally, the RuvA-RuvB-RuvC complex processes Holliday junction (HJ) DNA during genetic recombination and DNA repair. Endonuclease that resolves HJ intermediates. Cleaves cruciform DNA by making single-stranded nicks across the HJ at symmetrical positions within the homologous arms, yielding a 5'-phosphate and a 3'-hydroxyl group; requires a central core of homology in the junction. The consensus cleavage sequence is 5'-(A/T)TT(C/G)-3'. Cleavage occurs on the 3'-side of the TT dinucleotide at the point of strand exchange. HJ branch migration catalyzed by RuvA-RuvB allows RuvC to scan DNA until it finds its consensus sequence, where it cleaves and resolves the cruciform DNA. The sequence is that of Crossover junction endodeoxyribonuclease RuvC from Moorella thermoacetica (strain ATCC 39073 / JCM 9320).